The chain runs to 848 residues: MASLSFASSHASLFCCQQSSSAIILRPAGALLRLSRRQPSSHTISTTDQLFPRRSRMPRNVDTHAAAERNSPSTMSSLEAVDELETNGDSAVVVVREQQQQQHLLMGATDDGLPPSPYDTAWVAMVPAPGNPLVPRFPQCVDWILQNQRSDGSWGPDGGSGDHPSSPLGKDALMSTLACVLALKTWDAGEEHVRKGLSFVGNNSPSCVMTGDERDAPVGFSVIFPGMLARAIDMGLDIPMMTQANVDAFIRLRDTELNRMAATTGSKAFMSYVAEGLGDVLDWDEAAMVYQRQNGSFFNSPATTAAAAIHGNNDRALRYLDSLVNMFGSSVPTVYPRSTYSRLHMVDTLQKMGLSRSFVSEINEMLDMTYRSWLANDDEEMMLDMSTCAMAFRLLRMHGYDVSSDGLAQFSSESSFRDSVHGQANDTEALLELYKASQIQITEDELVLVDIRSWSAKLLKEQLGSDKVSRSVDAQEVQQVLKFPFYTTLDRLEHRRHIEQFKAGGFHMLKSAYRFCKEDEELVSLAVQGFHSSQALYQQELQFLTRWAKEARLHDLEFARIMPMNTFFPNAALMYAPELSEARILCTKNCMLATAVDDLFDVGGSREEMENLVRLIDMWDEHEEVGFCSERVEILFRAIYDTSKELAAKAMAVQNRSVINHVAELWADLVRAMMTEAEWSMRGHVPSSMEEYMQVAETSFALGPIVLMPLYLIGPELPEAVVRCPEYKQLFHHMNVCGRLLNDLQSYEREAKQGKINSVLLVAPRHGGSIEAAKSEVRRAIEASRRELLRMLVAEADATVPRPFRQEFWNMCKMVHLFYMEDDCYSSPKELVHAANMVVFDPLRVREL.

The N-terminal 64 residues, 1 to 64 (MASLSFASSH…SRMPRNVDTH (64 aa)), are a transit peptide targeting the chloroplast. Residues 148 to 168 (QRSDGSWGPDGGSGDHPSSPL) are disordered. Residues Asp597, Asp601, Asn742, Ser746, and Glu750 each coordinate Mg(2+). The DDXXD motif motif lies at 597–601 (DDLFD).

The protein belongs to the terpene synthase family. The cofactor is Mg(2+).

The protein localises to the plastid. The protein resides in the chloroplast. The catalysed reaction is ent-copalyl diphosphate = dolabradiene + diphosphate. Functionally, involved in the production of antifungal dolabralexin phytoalexins in response to biotic and abiotic stresses. In response to fungal infection and in associtation with AN2, is involved in the production dolabradiene, a type of antifungal phytoalexin. Converts ent-copalyl disphosphate (ent-CPP) to dolabradiene. The chain is Dolabradiene synthase KSL4, chloroplastic from Zea mays (Maize).